A 273-amino-acid chain; its full sequence is DNA repair protein RecO (273 aa).

Residues 250–273 are disordered; the sequence is NVGQNPSGKDDLNERRDVDGTGES. Residues 257-273 show a composition bias toward basic and acidic residues; the sequence is GKDDLNERRDVDGTGES.

Belongs to the RecO family.

Involved in DNA repair and RecF pathway recombination. This Desulfitobacterium hafniense (strain DSM 10664 / DCB-2) protein is DNA repair protein RecO.